Here is a 603-residue protein sequence, read N- to C-terminus: Adenine deaminase (603 aa).

Belongs to the metallo-dependent hydrolases superfamily. Adenine deaminase family. Mn(2+) serves as cofactor.

It carries out the reaction adenine + H2O + H(+) = hypoxanthine + NH4(+). The polypeptide is Adenine deaminase (Ruegeria pomeroyi (strain ATCC 700808 / DSM 15171 / DSS-3) (Silicibacter pomeroyi)).